Consider the following 420-residue polypeptide: uncharacterized protein (420 aa).

The 59-residue stretch at 7 to 65 folds into the TRAM domain; sequence NIERGSVINVEILNAAHGGQGIAKYDGRVIFVKGAFPGDRLSANITHVKKKFARATIAS. The S-adenosyl-L-methionine site is built by Q245, Y280, E304, and D349. The active-site Nucleophile is the C376.

This sequence belongs to the class I-like SAM-binding methyltransferase superfamily. RNA M5U methyltransferase family.

This is an uncharacterized protein from Corynebacterium diphtheriae (strain ATCC 700971 / NCTC 13129 / Biotype gravis).